A 442-amino-acid chain; its full sequence is tRNA pseudouridine(38/39) synthase (442 aa).

Residue Asp151 is the Nucleophile of the active site. Tyr222 provides a ligand contact to substrate.

Belongs to the tRNA pseudouridine synthase TruA family.

The protein localises to the nucleus. It catalyses the reaction uridine(38/39) in tRNA = pseudouridine(38/39) in tRNA. Its function is as follows. Formation of pseudouridines at positions 38 and 39 in the anticodon stem and loop of transfer RNAs. This chain is tRNA pseudouridine(38/39) synthase (DEG1), found in Saccharomyces cerevisiae (strain ATCC 204508 / S288c) (Baker's yeast).